Here is a 224-residue protein sequence, read N- to C-terminus: Viral late gene transcription factor 3 (224 aa).

The protein belongs to the orthopoxvirus VLTF-3/OPG127 family. As to quaternary structure, interacts with the late transcription elongation factor VLTF-4/OPG110. Interacts with the late transcription factors VLTF-1/OPG093.

Acts with RNA polymerase to initiate transcription from late gene promoters. This chain is Viral late gene transcription factor 3 (OPG127), found in Monkeypox virus.